The sequence spans 248 residues: PF03932 family protein CutC (248 aa).

It belongs to the CutC family. In terms of assembly, homodimer.

It localises to the cytoplasm. The sequence is that of PF03932 family protein CutC from Escherichia coli O127:H6 (strain E2348/69 / EPEC).